We begin with the raw amino-acid sequence, 431 residues long: Glutamate--tRNA ligase 2 (431 aa).

Residues 6–16 carry the 'HIGH' region motif; sequence PSPTGDMHIGN. A 'KMSKS' region motif is present at residues 235–239; that stretch reads KMSKR. Lysine 238 lines the ATP pocket.

This sequence belongs to the class-I aminoacyl-tRNA synthetase family. Glutamate--tRNA ligase type 1 subfamily. In terms of assembly, monomer.

The protein resides in the cytoplasm. The catalysed reaction is tRNA(Glu) + L-glutamate + ATP = L-glutamyl-tRNA(Glu) + AMP + diphosphate. In terms of biological role, catalyzes the attachment of glutamate to tRNA(Glu) in a two-step reaction: glutamate is first activated by ATP to form Glu-AMP and then transferred to the acceptor end of tRNA(Glu). This is Glutamate--tRNA ligase 2 from Campylobacter jejuni subsp. doylei (strain ATCC BAA-1458 / RM4099 / 269.97).